A 372-amino-acid chain; its full sequence is NAD(P)H-quinone oxidoreductase subunit 1 (372 aa).

Transmembrane regions (helical) follow at residues 27–47, 97–117, 128–148, 176–196, 204–224, 266–286, 308–328, and 347–367; these read IIWL…GVLV, ILFT…WLIV, VGIG…GLLM, LALS…IDIV, ILSW…ICAL, ILSA…PVPV, SIGI…AILL, and FLLP…LAFP.

The protein belongs to the complex I subunit 1 family. In terms of assembly, NDH-1 is composed of at least 11 different subunits.

It localises to the cellular thylakoid membrane. It carries out the reaction a plastoquinone + NADH + (n+1) H(+)(in) = a plastoquinol + NAD(+) + n H(+)(out). The enzyme catalyses a plastoquinone + NADPH + (n+1) H(+)(in) = a plastoquinol + NADP(+) + n H(+)(out). NDH-1 shuttles electrons from an unknown electron donor, via FMN and iron-sulfur (Fe-S) centers, to quinones in the respiratory and/or the photosynthetic chain. The immediate electron acceptor for the enzyme in this species is believed to be plastoquinone. Couples the redox reaction to proton translocation, and thus conserves the redox energy in a proton gradient. The chain is NAD(P)H-quinone oxidoreductase subunit 1 from Prochlorococcus marinus (strain AS9601).